The sequence spans 438 residues: Xylose isomerase (438 aa).

Catalysis depends on residues histidine 100 and aspartate 103. Mg(2+)-binding residues include glutamate 231, glutamate 267, histidine 270, aspartate 295, aspartate 306, aspartate 308, and aspartate 338.

Belongs to the xylose isomerase family. In terms of assembly, homotetramer. Mg(2+) serves as cofactor.

It is found in the cytoplasm. It carries out the reaction alpha-D-xylose = alpha-D-xylulofuranose. The polypeptide is Xylose isomerase (Pseudomonas syringae pv. syringae (strain B728a)).